The following is a 387-amino-acid chain: MFKHLRPVWAEINLDNLASNMKHIKELSNTKEIIGIVKADAYGHGALDIVPTLIENGATALAVAVVSEGVELRRGGIECPIMVLGFTPPSLIDMLLKHDIEQTVFSLDYAKELSKAAEKMHKVAKIHIAVDTGMGRIGFLPNEQSIQDVKAISMLPNIKIKGMFSHFSTADEKNKEYSAYQLNQFNKFYEGLKRENVNIETRHISNSAAIMDLPETIFEGVRPGIILYGYYPSNEVDKTKLELKPVMQLKTNVVHIKKIPSGEYISYGRKFKTDRESLIATLPVGYADGYTRLLFGKAKVIINGQLAPVVGRICMDQCMVDITDIKGDIKVGEEVILIGEKNGVKIDADDIAEMLGTINYEVICMISKRVPRVYIKNGEVIKVRNYI.

Lys-38 serves as the catalytic Proton acceptor; specific for D-alanine. Position 38 is an N6-(pyridoxal phosphate)lysine (Lys-38). A substrate-binding site is contributed by Arg-136. The active-site Proton acceptor; specific for L-alanine is the Tyr-267. Met-315 provides a ligand contact to substrate.

Belongs to the alanine racemase family. Pyridoxal 5'-phosphate serves as cofactor.

It carries out the reaction L-alanine = D-alanine. Its pathway is amino-acid biosynthesis; D-alanine biosynthesis; D-alanine from L-alanine: step 1/1. Functionally, catalyzes the interconversion of L-alanine and D-alanine. May also act on other amino acids. The sequence is that of Alanine racemase (alr) from Clostridium novyi (strain NT).